A 738-amino-acid chain; its full sequence is Translation initiation factor IF-2 (738 aa).

The segment covering 1-10 has biased composition (polar residues); sequence MNSMRISGHQ. Positions 1–150 are disordered; the sequence is MNSMRISGHQ…PTTVRAPVRP (150 aa). Gly residues predominate over residues 22 to 102; sequence AGGGRGPGNP…GGRGPSGGRG (81 aa). Basic and acidic residues predominate over residues 103 to 120; it reads GDGRRREESPTDHEDGRI. Residues 121 to 143 are compositionally biased toward low complexity; that stretch reads NRSGRSTSTTTTRTSSTLARPTT. One can recognise a tr-type G domain in the interval 238–405; sequence PRPPVVTIMG…MILLVADLNE (168 aa). The segment at 247-254 is G1; sequence GHVDHGKT. 247–254 contacts GTP; sequence GHVDHGKT. The interval 272–276 is G2; the sequence is GITQH. Residues 293–296 are G3; it reads DTPG. GTP is bound by residues 293–297 and 347–350; these read DTPGH and NKID. The tract at residues 347 to 350 is G4; that stretch reads NKID. The interval 383–385 is G5; that stretch reads SAK.

This sequence belongs to the TRAFAC class translation factor GTPase superfamily. Classic translation factor GTPase family. IF-2 subfamily.

It is found in the cytoplasm. One of the essential components for the initiation of protein synthesis. Protects formylmethionyl-tRNA from spontaneous hydrolysis and promotes its binding to the 30S ribosomal subunits. Also involved in the hydrolysis of GTP during the formation of the 70S ribosomal complex. The protein is Translation initiation factor IF-2 of Roseiflexus castenholzii (strain DSM 13941 / HLO8).